The primary structure comprises 649 residues: Acetyl-coenzyme A synthetase (649 aa).

CoA-binding positions include Arg-189 to Lys-192, Thr-311, and Asn-335. ATP is bound by residues Gly-387 to Pro-389, Asp-411 to Thr-416, Asp-500, and Arg-515. Residue Ser-523 coordinates CoA. Arg-526 lines the ATP pocket. 3 residues coordinate Mg(2+): Val-537, His-539, and Val-542. A CoA-binding site is contributed by Arg-584. At Lys-609 the chain carries N6-acetyllysine.

This sequence belongs to the ATP-dependent AMP-binding enzyme family. Requires Mg(2+) as cofactor. Post-translationally, acetylated. Deacetylation by the SIR2-homolog deacetylase activates the enzyme.

It carries out the reaction acetate + ATP + CoA = acetyl-CoA + AMP + diphosphate. Catalyzes the conversion of acetate into acetyl-CoA (AcCoA), an essential intermediate at the junction of anabolic and catabolic pathways. AcsA undergoes a two-step reaction. In the first half reaction, AcsA combines acetate with ATP to form acetyl-adenylate (AcAMP) intermediate. In the second half reaction, it can then transfer the acetyl group from AcAMP to the sulfhydryl group of CoA, forming the product AcCoA. The polypeptide is Acetyl-coenzyme A synthetase (Rhizobium meliloti (strain 1021) (Ensifer meliloti)).